We begin with the raw amino-acid sequence, 196 residues long: Probable GTP-binding protein EngB (196 aa).

The EngB-type G domain occupies 24–196 (ELSEVALSGR…IWNLIEPYIS (173 aa)). GTP contacts are provided by residues 32 to 39 (GRSNVGKS), 59 to 63 (GKTQT), 77 to 80 (DVPG), 144 to 147 (TKED), and 176 to 178 (YSS). Residues Ser39 and Thr61 each coordinate Mg(2+).

Belongs to the TRAFAC class TrmE-Era-EngA-EngB-Septin-like GTPase superfamily. EngB GTPase family. Mg(2+) is required as a cofactor.

Functionally, necessary for normal cell division and for the maintenance of normal septation. In Staphylococcus aureus (strain MRSA252), this protein is Probable GTP-binding protein EngB.